The chain runs to 714 residues: Forkhead box protein P2 (714 aa).

Polar residues predominate over residues 1–28 (MMQESATETISNSSMNQNGMSTLSSQLD). 2 disordered regions span residues 1–45 (MMQE…SEVS) and 280–338 (DNGI…TGAS). Over residues 291-304 (TTNNSSSTTSSTTS) the composition is skewed to low complexity. Polar residues predominate over residues 314 to 323 (SIVNGQSSVL). Positions 325–336 (ARRDSSSHEETG) are enriched in basic and acidic residues. A C2H2-type zinc finger spans residues 345-370 (GVCKWPGCESICEDFGQFLKHLNNEH). Residues 387–408 (VQQLEIQLSKERERLQAMMTHL) are leucine-zipper. A CTBP1-binding region spans residues 421 to 425 (PLNLV). The segment covering 437-458 (TSPQSLPQTPTTPTAPVTPITQ) has biased composition (low complexity). The disordered stretch occupies residues 437–464 (TSPQSLPQTPTTPTAPVTPITQGPSVIT). Positions 503–593 (RPPFTYATLI…SQKITGSPTL (91 aa)) form a DNA-binding region, fork-head. Disordered stretches follow at residues 648–667 (LDHI…QPHI) and 677–714 (VIAE…EDLE). The span at 698–714 (LEDDREIEEEPLSEDLE) shows a compositional bias: acidic residues.

As to quaternary structure, forms homodimers and heterodimers with FOXP1 and FOXP4. Dimerization is required for DNA-binding. Interacts with CTBP1. Interacts with FOXP1. Interacts with TBR1. Interacts with ZMYM2. As to expression, highest expression in lung. Lower expression in spleen, skeletal muscle, brain, kidney and small intestine.

The protein localises to the nucleus. In terms of biological role, transcriptional repressor that may play a role in the specification and differentiation of lung epithelium. May also play a role in developing neural, gastrointestinal and cardiovascular tissues. Can act with CTBP1 to synergistically repress transcription but CTPBP1 is not essential. Plays a role in synapse formation by regulating SRPX2 levels. This chain is Forkhead box protein P2 (Foxp2), found in Mus musculus (Mouse).